Reading from the N-terminus, the 214-residue chain is uncharacterized protein (214 aa).

A signal peptide spans 1–17 (MLKKIIILFLGVFVLSG). Cys18 is lipidated: N-palmitoyl cysteine. Residue Cys18 is the site of S-diacylglycerol cysteine attachment. Acidic residues predominate over residues 64–77 (DNLDDPEDDDDDYD). 3 disordered regions span residues 64–83 (DNLDDPEDDDDDYDNPLRGE), 106–138 (YKAESGESSDDDDMTLSKANKKVRKDNTDKERK), and 166–197 (TANQNYVPPVSNYEPVAPVKNNKPYNNNSKVK). The stretch at 120–162 (TLSKANKKVRKDNTDKERKMQEELDQIKAMLRETKRDISKYTC) forms a coiled coil.

It localises to the cell membrane. This is an uncharacterized protein from Rickettsia bellii (strain RML369-C).